The sequence spans 381 residues: Alkanesulfonate monooxygenase (381 aa).

Belongs to the SsuD family. Homotetramer.

It catalyses the reaction an alkanesulfonate + FMNH2 + O2 = an aldehyde + FMN + sulfite + H2O + 2 H(+). In terms of biological role, catalyzes the desulfonation of aliphatic sulfonates. The sequence is that of Alkanesulfonate monooxygenase from Citrobacter koseri (strain ATCC BAA-895 / CDC 4225-83 / SGSC4696).